The chain runs to 218 residues: Adenylate kinase (218 aa).

10-15 (GAGKGT) provides a ligand contact to ATP. The NMP stretch occupies residues 30–59 (STGDMLRAAVKAGSEMGLKAKAVMDAGQLV). Residues Thr-31, Arg-36, 57–59 (QLV), 85–88 (GFPR), and Gln-92 contribute to the AMP site. The tract at residues 122–159 (GRRVHEASGRTYHLVYNPPKVEGKDDVTGEDLVQRADD) is LID. ATP is bound by residues Arg-123 and 132-133 (TY). The AMP site is built by Arg-156 and Arg-167. Residue Gly-203 participates in ATP binding.

The protein belongs to the adenylate kinase family. In terms of assembly, monomer.

It localises to the cytoplasm. It carries out the reaction AMP + ATP = 2 ADP. It functions in the pathway purine metabolism; AMP biosynthesis via salvage pathway; AMP from ADP: step 1/1. Functionally, catalyzes the reversible transfer of the terminal phosphate group between ATP and AMP. Plays an important role in cellular energy homeostasis and in adenine nucleotide metabolism. The sequence is that of Adenylate kinase from Marinomonas sp. (strain MWYL1).